We begin with the raw amino-acid sequence, 193 residues long: Chlorate reductase assembly chaperone protein (193 aa).

Belongs to the type II DMSO reductase enzyme chaperone family.

The protein localises to the cytoplasm. In terms of biological role, may function as a system-specific chaperone protein essential for the assembly of an active chlorate reductase ClrABC. The protein is Chlorate reductase assembly chaperone protein (clrD) of Ideonella dechloratans.